Consider the following 842-residue polypeptide: Protein P (842 aa).

Residues 1–177 (MPLSYQHFRR…FCGSPYTWEQ (177 aa)) form a terminal protein domain (TP) region. Residues 178–345 (DLQHGAFLDG…YCLSHLVNLL (168 aa)) are spacer. Residues 184 to 238 (FLDGPSRVGKEPFHQQSSRIPSRSPVGPSIQSKYQQSRLGLQSQKGPLARGQQGR) are disordered. Over residues 212–228 (SIQSKYQQSRLGLQSQK) the composition is skewed to polar residues. The segment at 346-689 (QDWGPCTEHG…YMNLYPVARQ (344 aa)) is polymerase/reverse transcriptase domain (RT). In terms of domain architecture, Reverse transcriptase spans 356-599 (EYHIRIPRTP…YSLNFMGYVI (244 aa)). Positions 428, 550, and 551 each coordinate Mg(2+).

Belongs to the hepadnaviridae P protein family.

It catalyses the reaction DNA(n) + a 2'-deoxyribonucleoside 5'-triphosphate = DNA(n+1) + diphosphate. The catalysed reaction is Endonucleolytic cleavage to 5'-phosphomonoester.. With respect to regulation, activated by host HSP70 and HSP40 in vitro to be able to bind the epsilon loop of the pgRNA. Because deletion of the RNase H region renders the protein partly chaperone-independent, the chaperones may be needed indirectly to relieve occlusion of the RNA-binding site by this domain. Inhibited by several reverse-transcriptase inhibitors: Lamivudine, Adefovir and Entecavir. Functionally, multifunctional enzyme that converts the viral RNA genome into dsDNA in viral cytoplasmic capsids. This enzyme displays a DNA polymerase activity that can copy either DNA or RNA templates, and a ribonuclease H (RNase H) activity that cleaves the RNA strand of RNA-DNA heteroduplexes in a partially processive 3'- to 5'-endonucleasic mode. Neo-synthesized pregenomic RNA (pgRNA) are encapsidated together with the P protein, and reverse-transcribed inside the nucleocapsid. Initiation of reverse-transcription occurs first by binding the epsilon loop on the pgRNA genome, and is initiated by protein priming, thereby the 5'-end of (-)DNA is covalently linked to P protein. Partial (+)DNA is synthesized from the (-)DNA template and generates the relaxed circular DNA (RC-DNA) genome. After budding and infection, the RC-DNA migrates in the nucleus, and is converted into a plasmid-like covalently closed circular DNA (cccDNA). The activity of P protein does not seem to be necessary for cccDNA generation, and is presumably released from (+)DNA by host nuclear DNA repair machinery. The polypeptide is Protein P (Hepatitis B virus genotype G (isolate United States/USG17/2002) (HBV-G)).